We begin with the raw amino-acid sequence, 51 residues long: Insulin (51 aa).

3 disulfides stabilise this stretch: Cys8–Cys37, Cys20–Cys50, and Cys36–Cys41.

It belongs to the insulin family. In terms of assembly, heterodimer of a B chain and an A chain linked by two disulfide bonds.

The protein localises to the secreted. Its function is as follows. Insulin decreases blood glucose concentration. It increases cell permeability to monosaccharides, amino acids and fatty acids. It accelerates glycolysis, the pentose phosphate cycle, and glycogen synthesis in liver. This chain is Insulin (ins), found in Platichthys flesus (European flounder).